The chain runs to 334 residues: Anthranilate phosphoribosyltransferase (334 aa).

5-phospho-alpha-D-ribose 1-diphosphate is bound by residues Gly-81, 84 to 85 (GD), Thr-89, 91 to 94 (NIST), 109 to 117 (KHGNRSVSS), and Ala-121. Residue Gly-81 participates in anthranilate binding. A Mg(2+)-binding site is contributed by Ser-93. Asn-112 is an anthranilate binding site. Arg-167 serves as a coordination point for anthranilate. Mg(2+) contacts are provided by Asp-225 and Glu-226.

This sequence belongs to the anthranilate phosphoribosyltransferase family. Homodimer. The cofactor is Mg(2+).

It carries out the reaction N-(5-phospho-beta-D-ribosyl)anthranilate + diphosphate = 5-phospho-alpha-D-ribose 1-diphosphate + anthranilate. It functions in the pathway amino-acid biosynthesis; L-tryptophan biosynthesis; L-tryptophan from chorismate: step 2/5. Catalyzes the transfer of the phosphoribosyl group of 5-phosphorylribose-1-pyrophosphate (PRPP) to anthranilate to yield N-(5'-phosphoribosyl)-anthranilate (PRA). This chain is Anthranilate phosphoribosyltransferase, found in Histophilus somni (strain 2336) (Haemophilus somnus).